Here is a 120-residue protein sequence, read N- to C-terminus: Transmembrane protein 010R (120 aa).

Helical transmembrane passes span 40–60 and 72–92; these read FCGA…ATAT and SIFF…VWFL.

The protein belongs to the IIV-6 010R family.

It is found in the membrane. In Invertebrate iridescent virus 6 (IIV-6), this protein is Transmembrane protein 010R.